Consider the following 401-residue polypeptide: Probable 2,3-bisphosphoglycerate-independent phosphoglycerate mutase (401 aa).

The protein belongs to the BPG-independent phosphoglycerate mutase family. A-PGAM subfamily.

The enzyme catalyses (2R)-2-phosphoglycerate = (2R)-3-phosphoglycerate. It functions in the pathway carbohydrate degradation; glycolysis; pyruvate from D-glyceraldehyde 3-phosphate: step 3/5. In terms of biological role, catalyzes the interconversion of 2-phosphoglycerate and 3-phosphoglycerate. The sequence is that of Probable 2,3-bisphosphoglycerate-independent phosphoglycerate mutase from Thermotoga petrophila (strain ATCC BAA-488 / DSM 13995 / JCM 10881 / RKU-1).